A 382-amino-acid polypeptide reads, in one-letter code: Chaperone protein DnaJ (382 aa).

Residues 5–70 (DYYDLLGLSK…DKRAAYDRYG (66 aa)) form the J domain. The CR-type zinc finger occupies 138–216 (GTKVPINYVT…CSGSGRVRDE (79 aa)). C151, C154, C168, C171, C190, C193, C204, and C207 together coordinate Zn(2+). CXXCXGXG motif repeat units lie at residues 151 to 158 (CSSCSGSG), 168 to 175 (CNTCHGAG), 190 to 197 (CHVCNGEG), and 204 to 211 (CKKCSGSG).

The protein belongs to the DnaJ family. As to quaternary structure, homodimer. Requires Zn(2+) as cofactor.

It is found in the cytoplasm. Its function is as follows. Participates actively in the response to hyperosmotic and heat shock by preventing the aggregation of stress-denatured proteins and by disaggregating proteins, also in an autonomous, DnaK-independent fashion. Unfolded proteins bind initially to DnaJ; upon interaction with the DnaJ-bound protein, DnaK hydrolyzes its bound ATP, resulting in the formation of a stable complex. GrpE releases ADP from DnaK; ATP binding to DnaK triggers the release of the substrate protein, thus completing the reaction cycle. Several rounds of ATP-dependent interactions between DnaJ, DnaK and GrpE are required for fully efficient folding. Also involved, together with DnaK and GrpE, in the DNA replication of plasmids through activation of initiation proteins. In Ehrlichia ruminantium (strain Welgevonden), this protein is Chaperone protein DnaJ.